We begin with the raw amino-acid sequence, 127 residues long: Large ribosomal subunit protein bL19 (127 aa).

This sequence belongs to the bacterial ribosomal protein bL19 family.

Its function is as follows. This protein is located at the 30S-50S ribosomal subunit interface and may play a role in the structure and function of the aminoacyl-tRNA binding site. The polypeptide is Large ribosomal subunit protein bL19 (Ruegeria pomeroyi (strain ATCC 700808 / DSM 15171 / DSS-3) (Silicibacter pomeroyi)).